Reading from the N-terminus, the 189-residue chain is Peptidyl-tRNA hydrolase (189 aa).

Position 15 (Tyr15) interacts with tRNA. His20 acts as the Proton acceptor in catalysis. Phe66, Asn68, and Asn114 together coordinate tRNA.

This sequence belongs to the PTH family. As to quaternary structure, monomer.

It localises to the cytoplasm. The enzyme catalyses an N-acyl-L-alpha-aminoacyl-tRNA + H2O = an N-acyl-L-amino acid + a tRNA + H(+). In terms of biological role, hydrolyzes ribosome-free peptidyl-tRNAs (with 1 or more amino acids incorporated), which drop off the ribosome during protein synthesis, or as a result of ribosome stalling. Functionally, catalyzes the release of premature peptidyl moieties from peptidyl-tRNA molecules trapped in stalled 50S ribosomal subunits, and thus maintains levels of free tRNAs and 50S ribosomes. The protein is Peptidyl-tRNA hydrolase of Streptococcus equi subsp. zooepidemicus (strain H70).